Consider the following 286-residue polypeptide: Protein METABOLIC NETWORK MODULATOR 1 (286 aa).

Over residues Met1 to Asn10 the composition is skewed to basic and acidic residues. 3 disordered regions span residues Met1–Ala60, Val123–Val146, and Gly181–Ser204. A compositionally biased stretch (basic residues) spans Lys20 to Gln29. Basic and acidic residues predominate over residues Leu30–Leu39. Residues Lys131–Glu140 show a composition bias toward basic residues. The segment covering Pro191–Ser204 has biased composition (polar residues).

Mailny observed in young seedlings and in emerging leaves.

Lineage-specific modulator of primary metabolism. Influences flowering time. This Arabidopsis thaliana (Mouse-ear cress) protein is Protein METABOLIC NETWORK MODULATOR 1.